Reading from the N-terminus, the 235-residue chain is Sugar fermentation stimulation protein homolog (235 aa).

Belongs to the SfsA family.

This Pseudomonas aeruginosa (strain ATCC 15692 / DSM 22644 / CIP 104116 / JCM 14847 / LMG 12228 / 1C / PRS 101 / PAO1) protein is Sugar fermentation stimulation protein homolog.